The primary structure comprises 257 residues: Thiazole synthase (257 aa).

K95 functions as the Schiff-base intermediate with DXP in the catalytic mechanism. 1-deoxy-D-xylulose 5-phosphate-binding positions include G156, 182–183, and 204–205; these read AG and NT.

It belongs to the ThiG family. As to quaternary structure, homotetramer. Forms heterodimers with either ThiH or ThiS.

The protein resides in the cytoplasm. It catalyses the reaction [ThiS sulfur-carrier protein]-C-terminal-Gly-aminoethanethioate + 2-iminoacetate + 1-deoxy-D-xylulose 5-phosphate = [ThiS sulfur-carrier protein]-C-terminal Gly-Gly + 2-[(2R,5Z)-2-carboxy-4-methylthiazol-5(2H)-ylidene]ethyl phosphate + 2 H2O + H(+). It participates in cofactor biosynthesis; thiamine diphosphate biosynthesis. Catalyzes the rearrangement of 1-deoxy-D-xylulose 5-phosphate (DXP) to produce the thiazole phosphate moiety of thiamine. Sulfur is provided by the thiocarboxylate moiety of the carrier protein ThiS. In vitro, sulfur can be provided by H(2)S. This is Thiazole synthase from Vibrio vulnificus (strain CMCP6).